The sequence spans 202 residues: Hypoxanthine-guanine phosphoribosyltransferase (202 aa).

Diphosphate is bound by residues Lys-66 and Gly-67. Glu-122 and Asp-123 together coordinate Mg(2+). The Proton acceptor role is filled by Asp-126. GMP is bound by residues Lys-154, 175-176 (FV), and Asp-182. Arg-188 serves as a coordination point for diphosphate.

The protein belongs to the purine/pyrimidine phosphoribosyltransferase family. It depends on Mg(2+) as a cofactor.

The protein localises to the cytoplasm. It catalyses the reaction IMP + diphosphate = hypoxanthine + 5-phospho-alpha-D-ribose 1-diphosphate. The enzyme catalyses GMP + diphosphate = guanine + 5-phospho-alpha-D-ribose 1-diphosphate. It participates in purine metabolism; IMP biosynthesis via salvage pathway; IMP from hypoxanthine: step 1/1. The protein operates within purine metabolism; GMP biosynthesis via salvage pathway; GMP from guanine: step 1/1. In terms of biological role, purine salvage pathway enzyme that catalyzes the transfer of the ribosyl-5-phosphate group from 5-phospho-alpha-D-ribose 1-diphosphate (PRPP) to the N9 position of the 6-oxopurines hypoxanthine and guanine to form the corresponding ribonucleotides IMP (inosine 5'-monophosphate) and GMP (guanosine 5'-monophosphate), with the release of PPi. This is Hypoxanthine-guanine phosphoribosyltransferase (hpt) from Mycobacterium tuberculosis (strain CDC 1551 / Oshkosh).